Here is a 288-residue protein sequence, read N- to C-terminus: Elongation factor Ts (288 aa).

Residues 79 to 82 form an involved in Mg(2+) ion dislocation from EF-Tu region; sequence TDFV.

Belongs to the EF-Ts family.

The protein resides in the cytoplasm. Associates with the EF-Tu.GDP complex and induces the exchange of GDP to GTP. It remains bound to the aminoacyl-tRNA.EF-Tu.GTP complex up to the GTP hydrolysis stage on the ribosome. This Ehrlichia ruminantium (strain Welgevonden) protein is Elongation factor Ts.